The chain runs to 122 residues: Large ribosomal subunit protein uL14c (122 aa).

This sequence belongs to the universal ribosomal protein uL14 family. In terms of assembly, part of the 50S ribosomal subunit.

The protein localises to the plastid. The protein resides in the chloroplast. Binds to 23S rRNA. The polypeptide is Large ribosomal subunit protein uL14c (Pyropia yezoensis (Susabi-nori)).